A 315-amino-acid chain; its full sequence is tRNA dimethylallyltransferase (315 aa).

Residue 13-20 coordinates ATP; it reads GPTASGKT. 15 to 20 is a binding site for substrate; the sequence is TASGKT. Interaction with substrate tRNA stretches follow at residues 38–41, 162–166, 243–248, and 276–283; these read DSAL, QRLSR, RCVGYR, and KRQITWLR.

This sequence belongs to the IPP transferase family. In terms of assembly, monomer. Mg(2+) is required as a cofactor.

It catalyses the reaction adenosine(37) in tRNA + dimethylallyl diphosphate = N(6)-dimethylallyladenosine(37) in tRNA + diphosphate. Catalyzes the transfer of a dimethylallyl group onto the adenine at position 37 in tRNAs that read codons beginning with uridine, leading to the formation of N6-(dimethylallyl)adenosine (i(6)A). This Vibrio cholerae serotype O1 (strain ATCC 39541 / Classical Ogawa 395 / O395) protein is tRNA dimethylallyltransferase.